Consider the following 274-residue polypeptide: Large ribosomal subunit protein uL2 (274 aa).

2 disordered regions span residues Lys28 to His53 and Val223 to Lys274. Residues Lys39 to Arg48 are compositionally biased toward low complexity. A compositionally biased stretch (basic residues) spans Lys254–Lys274.

It belongs to the universal ribosomal protein uL2 family. As to quaternary structure, part of the 50S ribosomal subunit. Forms a bridge to the 30S subunit in the 70S ribosome.

One of the primary rRNA binding proteins. Required for association of the 30S and 50S subunits to form the 70S ribosome, for tRNA binding and peptide bond formation. It has been suggested to have peptidyltransferase activity; this is somewhat controversial. Makes several contacts with the 16S rRNA in the 70S ribosome. The chain is Large ribosomal subunit protein uL2 from Pseudoalteromonas translucida (strain TAC 125).